We begin with the raw amino-acid sequence, 430 residues long: Trigger factor (430 aa).

The 86-residue stretch at 157-242 (GDLVALETWS…AVEVSEPVLP (86 aa)) folds into the PPIase FKBP-type domain.

The protein belongs to the FKBP-type PPIase family. Tig subfamily.

It localises to the cytoplasm. The enzyme catalyses [protein]-peptidylproline (omega=180) = [protein]-peptidylproline (omega=0). Involved in protein export. Acts as a chaperone by maintaining the newly synthesized protein in an open conformation. Functions as a peptidyl-prolyl cis-trans isomerase. This is Trigger factor from Xanthomonas euvesicatoria pv. vesicatoria (strain 85-10) (Xanthomonas campestris pv. vesicatoria).